We begin with the raw amino-acid sequence, 598 residues long: Elongation factor 4 (598 aa).

Positions 3–185 (QHIRNFSIIA…MIVARIPPPE (183 aa)) constitute a tr-type G domain. GTP contacts are provided by residues 15-20 (DHGKST) and 132-135 (NKID).

The protein belongs to the TRAFAC class translation factor GTPase superfamily. Classic translation factor GTPase family. LepA subfamily.

It localises to the cell inner membrane. The enzyme catalyses GTP + H2O = GDP + phosphate + H(+). In terms of biological role, required for accurate and efficient protein synthesis under certain stress conditions. May act as a fidelity factor of the translation reaction, by catalyzing a one-codon backward translocation of tRNAs on improperly translocated ribosomes. Back-translocation proceeds from a post-translocation (POST) complex to a pre-translocation (PRE) complex, thus giving elongation factor G a second chance to translocate the tRNAs correctly. Binds to ribosomes in a GTP-dependent manner. This is Elongation factor 4 from Nitrosomonas eutropha (strain DSM 101675 / C91 / Nm57).